The following is a 337-amino-acid chain: Anthranilate phosphoribosyltransferase (337 aa).

5-phospho-alpha-D-ribose 1-diphosphate contacts are provided by residues glycine 80, 83 to 84, threonine 88, 90 to 93, 108 to 116, and serine 120; these read GD, NIST, and KHGNRSVSS. Glycine 80 contacts anthranilate. Serine 92 provides a ligand contact to Mg(2+). Asparagine 111 contacts anthranilate. Residue arginine 166 coordinates anthranilate. Residues aspartate 225 and glutamate 226 each coordinate Mg(2+).

Belongs to the anthranilate phosphoribosyltransferase family. In terms of assembly, homodimer. Mg(2+) serves as cofactor.

It carries out the reaction N-(5-phospho-beta-D-ribosyl)anthranilate + diphosphate = 5-phospho-alpha-D-ribose 1-diphosphate + anthranilate. Its pathway is amino-acid biosynthesis; L-tryptophan biosynthesis; L-tryptophan from chorismate: step 2/5. Functionally, catalyzes the transfer of the phosphoribosyl group of 5-phosphorylribose-1-pyrophosphate (PRPP) to anthranilate to yield N-(5'-phosphoribosyl)-anthranilate (PRA). In Syntrophobacter fumaroxidans (strain DSM 10017 / MPOB), this protein is Anthranilate phosphoribosyltransferase.